Reading from the N-terminus, the 316-residue chain is Cobalamin biosynthesis protein CobD (316 aa).

The next 5 membrane-spanning stretches (helical) occupy residues 45–65 (FSPY…ALGV), 78–100 (PVLY…SLAF), 151–171 (DGVI…AMTY), 209–229 (LTWL…KGAL), and 291–311 (ISLL…FYLV).

This sequence belongs to the CobD/CbiB family.

It localises to the cell membrane. It participates in cofactor biosynthesis; adenosylcobalamin biosynthesis. In terms of biological role, converts cobyric acid to cobinamide by the addition of aminopropanol on the F carboxylic group. The polypeptide is Cobalamin biosynthesis protein CobD (Streptococcus sanguinis (strain SK36)).